Here is a 336-residue protein sequence, read N- to C-terminus: Galactose/methyl galactoside import permease protein MglC (336 aa).

Transmembrane regions (helical) follow at residues 17-37, 53-73, 107-127, 128-148, 181-201, 231-251, 257-277, and 306-326; these read AIYFVLLILLGIIIAQDPTFL, LIIALGVAGLLITQGTDLSAG, VVILAVCAIGAVIGLVNGLVI, AYLNVTPFIATMGTMIIIYGF, FKLSYITIYAAIAALLVWIMW, LVAIYMIAGMFYAFGGMLEAG, TNNLGFMYELDAIAACVVGGV, and IGVNPYWQYIIKGSIIILAVA.

Belongs to the binding-protein-dependent transport system permease family. AraH/RbsC subfamily. As to quaternary structure, the complex is composed of one ATP-binding protein (MglA), two transmembrane proteins (MglC) and a solute-binding protein (MglB).

It is found in the cell inner membrane. Functionally, part of the ABC transporter complex MglABC involved in galactose/methyl galactoside import. Probably responsible for the translocation of the substrate across the membrane. In Haemophilus influenzae (strain ATCC 51907 / DSM 11121 / KW20 / Rd), this protein is Galactose/methyl galactoside import permease protein MglC (mglC).